The chain runs to 371 residues: Ubiquitin receptor RAD23b (371 aa).

The Ubiquitin-like domain maps to 1–79 (MKLTVKTLKG…LVVMLSKSKS (79 aa)). The span at 79–117 (SGGSAGQASVQTSSVSQPVSATTSSTKPAAPSTTQSSPV) shows a compositional bias: low complexity. A disordered region spans residues 79–142 (SGGSAGQASV…DTYGQAASTL (64 aa)). Positions 128–142 (PAAQTDTYGQAASTL) are enriched in polar residues. The region spanning 146 to 189 (SSLEQMVQQIMEMGGGSWDKETVTRALRAAYNNPERAVDYLYSG) is the UBA 1 domain. The 44-residue stretch at 242 to 285 (GTLEFLRNNDQFQQLRTMVHSNPQILQPMLQELGKQNPQLLRLI) folds into the STI1 domain. In terms of domain architecture, UBA 2 spans 325 to 365 (PAEQEAIQRLEAMGFDRALVIEAFLACDRNEELAANYLLEN).

This sequence belongs to the RAD23 family. Interacts with 'Lys-48'-linked polyubiquitin chains. Interacts with RPN10 via its ubiquitin-like domain. Interacts with UBQ1, UBQ2, UBQ5, UBQ7, UBQ10, UBQ11 and IAA16. Binds to RAD4. Widely expressed in the whole plant.

It is found in the nucleus. The protein localises to the cytoplasm. Its function is as follows. May be involved in nucleotide excision repair. Binds and presumably selects ubiquitin-conjugates for destruction. Prefers multiubiquitin chains rather than single ubiquitins, with a binding affinity for 'Lys-48'-linked ubiquitin chains. Acts as a ubiquitin receptor that associates with the 26S proteasomal docking subunit RPN10 for the indirect recognition of ubiquitinated substrates of ubiquitin/26S proteasome-mediated proteolysis (UPP). Involved in UV tolerance in both roots and hypocotyls, specifically in dark conditions. The protein is Ubiquitin receptor RAD23b of Arabidopsis thaliana (Mouse-ear cress).